The primary structure comprises 182 residues: Protein Syd (182 aa).

It belongs to the Syd family.

Its subcellular location is the cell inner membrane. Interacts with the SecY protein in vivo. May bind preferentially to an uncomplexed state of SecY, thus functioning either as a chelating agent for excess SecY in the cell or as a regulatory factor that negatively controls the translocase function. The protein is Protein Syd of Pectobacterium atrosepticum (strain SCRI 1043 / ATCC BAA-672) (Erwinia carotovora subsp. atroseptica).